Reading from the N-terminus, the 304-residue chain is Putative S-adenosyl-L-methionine-dependent methyltransferase MAV_1058 (304 aa).

Residues Asp128 and 157–158 (DL) each bind S-adenosyl-L-methionine.

This sequence belongs to the UPF0677 family.

Functionally, exhibits S-adenosyl-L-methionine-dependent methyltransferase activity. The chain is Putative S-adenosyl-L-methionine-dependent methyltransferase MAV_1058 from Mycobacterium avium (strain 104).